A 226-amino-acid polypeptide reads, in one-letter code: PKHD-type hydroxylase LHK_00496 (226 aa).

The 101-residue stretch at 78-178 (RFFPPLFNRY…RVASFMWIQS (101 aa)) folds into the Fe2OG dioxygenase domain. Fe cation is bound by residues H96, D98, and H159. R169 provides a ligand contact to 2-oxoglutarate.

Fe(2+) is required as a cofactor. L-ascorbate serves as cofactor.

In Laribacter hongkongensis (strain HLHK9), this protein is PKHD-type hydroxylase LHK_00496.